The primary structure comprises 349 residues: MAENAYSKAGVDVEAGYQVVERIKKHVARTERLGAMGALGSFGGMFDLSSLHLKEPVLVSGTDGVGTKLLLAIEADKHDTIGIDCVAMCVNDILAQGAEPLFFLDYIATGKTDPVKMEQIVKGVADGCEQAGAALIGGETAEMPDMYGAEDYDLAGFTVGAVEKQKLITEGAVKEGDTLIGIPSSGIHSNGYSLVRKIFFKDNELTLDAEISELDVPLVEELLKPTRIYVKPVLEVLKEVDVHGITHVTGGGFVENLPRMLTNDLAVKVELGSWPVLPIFDVMKKYGQLSELEMYEIFNMGIGMVLAVAKADVERTLEVLVQNGEAAYVIGEVTTRENDAVIFTGGTKG.

The protein belongs to the AIR synthase family.

The protein resides in the cytoplasm. The catalysed reaction is 2-formamido-N(1)-(5-O-phospho-beta-D-ribosyl)acetamidine + ATP = 5-amino-1-(5-phospho-beta-D-ribosyl)imidazole + ADP + phosphate + H(+). Its pathway is purine metabolism; IMP biosynthesis via de novo pathway; 5-amino-1-(5-phospho-D-ribosyl)imidazole from N(2)-formyl-N(1)-(5-phospho-D-ribosyl)glycinamide: step 2/2. The sequence is that of Phosphoribosylformylglycinamidine cyclo-ligase from Listeria monocytogenes serotype 4b (strain CLIP80459).